We begin with the raw amino-acid sequence, 125 residues long: Large ribosomal subunit protein bL20 (125 aa).

It belongs to the bacterial ribosomal protein bL20 family.

Its function is as follows. Binds directly to 23S ribosomal RNA and is necessary for the in vitro assembly process of the 50S ribosomal subunit. It is not involved in the protein synthesizing functions of that subunit. The chain is Large ribosomal subunit protein bL20 from Zymomonas mobilis subsp. mobilis (strain ATCC 31821 / ZM4 / CP4).